We begin with the raw amino-acid sequence, 295 residues long: Aquaporin-9 (295 aa).

Over 1-24 (MQPEGAEKGKSFKQRLVLKSSLAK) the chain is Cytoplasmic. The chain crosses the membrane as a helical span at residues 25–43 (ETLSEFLGTFILIVLGCGC). Over 44–57 (VAQAILSRGRFGGV) the chain is Extracellular. The helical transmembrane segment at 58 to 77 (ITINVGFSMAVAMAIYVAGG) threads the bilayer. The Cytoplasmic portion of the chain corresponds to 78–79 (VS). An intramembrane region (discontinuously helical) is located at residues 80 to 92 (GGHINPAVSLAMC). An NPA 1 motif is present at residues 84–86 (NPA). Over 93–98 (LFGRMK) the chain is Cytoplasmic. A helical membrane pass occupies residues 99–123 (WFKLPFYVGAQFLGAFVGAATVFGI). The Extracellular portion of the chain corresponds to 124-160 (YYDGLMSFAGGKLLIVGENATAHIFATYPAPYLSLAN). A helical membrane pass occupies residues 161–178 (AFADQVVATMILLIIVFA). Over 179–190 (IFDSRNLGAPRG) the chain is Cytoplasmic. A helical membrane pass occupies residues 191-207 (LEPIAIGLLIIVIASSL). Topologically, residues 208-210 (GLN) are extracellular. Residues 211 to 225 (SGCAMNPARDLSPRL) constitute an intramembrane region (discontinuously helical). The NPA 2 signature appears at 216–218 (NPA). At 226-243 (FTALAGWGFEVFRAGNNF) the chain is on the extracellular side. A helical membrane pass occupies residues 244–264 (WWIPVVGPLVGAVIGGLIYVL). The Cytoplasmic portion of the chain corresponds to 265–295 (VIEIHHPEPDSVFKTEQSEDKPEKYELSVIM).

This sequence belongs to the MIP/aquaporin (TC 1.A.8) family. Homotetramer; each monomer provides an independent glycerol/water pore. Highly expressed in peripheral leukocytes. Also expressed in liver, lung, and spleen.

It localises to the cell membrane. It is found in the basolateral cell membrane. It catalyses the reaction glycerol(in) = glycerol(out). The catalysed reaction is H2O(in) = H2O(out). The enzyme catalyses urea(in) = urea(out). It carries out the reaction (S)-lactate(in) = (S)-lactate(out). It catalyses the reaction NH4(+)(in) = NH4(+)(out). The catalysed reaction is uracil(in) = uracil(out). The enzyme catalyses adenine(out) = adenine(in). It carries out the reaction 3-hydroxybutanoate(in) = 3-hydroxybutanoate(out). It catalyses the reaction D-sorbitol(in) = D-sorbitol(out). The catalysed reaction is D-mannitol(in) = D-mannitol(out). The enzyme catalyses H2O2(out) = H2O2(in). It carries out the reaction arsenite(in) = arsenite(out). It catalyses the reaction selenite(in) = selenite(out). Aquaglyceroporins form homotetrameric transmembrane channels, with each monomer independently mediating glycerol and water transport across the plasma membrane along their osmotic gradient. AQP9 is the primary route for glycerol uptake in hepatocytes, supporting hepatic gluconeogenesis. It exhibits broad specificity and may transport various small, non-charged solutes, including carbamides, polyols, purines, and pyrimidines. AQP9 may also facilitate hepatic urea extrusion. Due to its permeability to lactate, AQP9 might participate in the astrocyte-to-neuron lactate shuttle, supplying neurons with energy. Additionally, AQP9 is permeable to arsenite, contributing to arsenic excretion by the liver and providing partial protection against arsenic toxicity. It is also permeable to H2O2 in vivo. Could also be permeable to ammonium. The sequence is that of Aquaporin-9 from Homo sapiens (Human).